A 253-amino-acid chain; its full sequence is Imidazole glycerol phosphate synthase subunit HisF (253 aa).

Residues Asp-11 and Asp-130 contribute to the active site.

The protein belongs to the HisA/HisF family. Heterodimer of HisH and HisF.

Its subcellular location is the cytoplasm. It carries out the reaction 5-[(5-phospho-1-deoxy-D-ribulos-1-ylimino)methylamino]-1-(5-phospho-beta-D-ribosyl)imidazole-4-carboxamide + L-glutamine = D-erythro-1-(imidazol-4-yl)glycerol 3-phosphate + 5-amino-1-(5-phospho-beta-D-ribosyl)imidazole-4-carboxamide + L-glutamate + H(+). It participates in amino-acid biosynthesis; L-histidine biosynthesis; L-histidine from 5-phospho-alpha-D-ribose 1-diphosphate: step 5/9. Functionally, IGPS catalyzes the conversion of PRFAR and glutamine to IGP, AICAR and glutamate. The HisF subunit catalyzes the cyclization activity that produces IGP and AICAR from PRFAR using the ammonia provided by the HisH subunit. The chain is Imidazole glycerol phosphate synthase subunit HisF from Paracoccus denitrificans (strain Pd 1222).